Consider the following 77-residue polypeptide: Putative defensin-like protein 120 (77 aa).

A signal peptide spans 1–26 (MTQKATILAIFMVVLVLGLETKETQG). Cystine bridges form between Cys30–Cys75, Cys39–Cys60, Cys44–Cys69, and Cys48–Cys71.

This sequence belongs to the DEFL family.

The protein localises to the secreted. This Arabidopsis thaliana (Mouse-ear cress) protein is Putative defensin-like protein 120 (LCR56).